The sequence spans 480 residues: MSFPQLGYPQYLSAAGPGAYGGERPGVLAAAAAAAAAASSGRPGTAELGAGAGAAAVTSVLGMYAAAGPYAGAPNYSAFLPYAADLSLFSQMGSQYELKDNPGVHPATFAAHTTPAYYPYGQFQYGDPGRPKNATRESTSTLKAWLNEHRKNPYPTKGEKIMLAIITKMTLTQVSTWFANARRRLKKENKVTWGARSKDQEDGALFGSDTEGDPEKAEDDEEIDLESIDIDQIDERDGDQSNEDEEDKAEAPRARVAPPASARDQSSPLSAAETLKSQDSPLGLVKEVSEPGSTRLLSPGAAAVGLQGAPHSKPKIWSLAETATSPDGAPKASPPPPSSHASAHGPPSGSPLQHPAFLPSHGLYTCHIGKFSNWTNGAFLAQGSLLNMRSFLGVSAPHAAPHGPHLTAPPPPQPPVQVATGVLHGEKASARSSPALPERDLVTRPDSPPQQLKSPFQPVRDNSLAPQEGTPRILAALPSA.

Residues 127 to 189 (DPGRPKNATR…NARRRLKKEN (63 aa)) constitute a DNA-binding region (homeobox; TALE-type). 3 disordered regions span residues 190 to 285 (KVTW…LGLV), 318 to 354 (SLAE…PLQH), and 401 to 480 (PHGP…LPSA). The segment covering 210 to 232 (TEGDPEKAEDDEEIDLESIDIDQ) has biased composition (acidic residues). Ser-241 bears the Phosphoserine mark. Residues 254-263 (ARVAPPASAR) show a composition bias toward low complexity. Over residues 264-280 (DQSSPLSAAETLKSQDS) the composition is skewed to polar residues. Positions 339 to 351 (SHASAHGPPSGSP) are enriched in low complexity.

The protein belongs to the TALE/IRO homeobox family. Expressed in specific and overlapping patterns with Irx1 and Irx2 in the developing and adult metanephric kidney. In the adult metanephros, renal expression is found in the loop of Henle in the S3 proximal tubule segment and in the thick ascending limb (TAL) of the distal tubule.

It is found in the nucleus. In Mus musculus (Mouse), this protein is Iroquois-class homeodomain protein IRX-1 (Irx1).